We begin with the raw amino-acid sequence, 509 residues long: DNA primase DnaG (509 aa).

In terms of domain architecture, Toprim spans 167–253 (DAIVVVEGRA…CVEDLARHEV (87 aa)). Glu-173, Asp-215, and Asp-217 together coordinate Mg(2+). Residues 267–411 (KQAASDDADP…ASTDEQPKTL (145 aa)) form a disordered region. Low complexity-rich tracts occupy residues 313–331 (PVSS…ETAA) and 383–402 (ESTA…AAGA).

It belongs to the archaeal DnaG primase family. Forms a ternary complex with MCM helicase and DNA. Mg(2+) is required as a cofactor.

The catalysed reaction is ssDNA + n NTP = ssDNA/pppN(pN)n-1 hybrid + (n-1) diphosphate.. In terms of biological role, RNA polymerase that catalyzes the synthesis of short RNA molecules used as primers for DNA polymerase during DNA replication. In Natronomonas pharaonis (strain ATCC 35678 / DSM 2160 / CIP 103997 / JCM 8858 / NBRC 14720 / NCIMB 2260 / Gabara) (Halobacterium pharaonis), this protein is DNA primase DnaG.